Reading from the N-terminus, the 196-residue chain is DnaA initiator-associating protein DiaA (196 aa).

Residues 34–196 (LVHSLLNGNK…DNTLFPHQDD (163 aa)) enclose the SIS domain.

The protein belongs to the SIS family. DiaA subfamily. As to quaternary structure, homotetramer; dimer of dimers.

Its function is as follows. Required for the timely initiation of chromosomal replication via direct interactions with the DnaA initiator protein. This Citrobacter koseri (strain ATCC BAA-895 / CDC 4225-83 / SGSC4696) protein is DnaA initiator-associating protein DiaA.